Here is a 150-residue protein sequence, read N- to C-terminus: Large ribosomal subunit protein bL9 (150 aa).

The protein belongs to the bacterial ribosomal protein bL9 family.

Functionally, binds to the 23S rRNA. The sequence is that of Large ribosomal subunit protein bL9 from Streptococcus equi subsp. equi (strain 4047).